A 70-amino-acid polypeptide reads, in one-letter code: Brevinin-1Vb (70 aa).

An N-terminal signal peptide occupies residues 1–22 (MFTLKKSLLLLFFLGTINLSLC). Positions 23-44 (EEERNAEEERRDEPDEMNVEVE) are excised as a propeptide. Residues cysteine 64 and cysteine 70 are joined by a disulfide bond.

In terms of tissue distribution, expressed by the skin glands.

The protein localises to the secreted. In terms of biological role, antimicrobial peptide. The polypeptide is Brevinin-1Vb (Odorrana versabilis (Chinese bamboo leaf odorous frog)).